The chain runs to 154 residues: Superoxide dismutase [Cu-Zn] (154 aa).

Cu cation contacts are provided by histidine 47, histidine 49, and histidine 64. Residues cysteine 58 and cysteine 147 are joined by a disulfide bond. The tract at residues 62 to 89 (GPHFNPFKKNHGGPTDSERHVGDLGNVK) is disordered. Residues histidine 64, histidine 72, histidine 81, and aspartate 84 each contribute to the Zn(2+) site. A Cu cation-binding site is contributed by histidine 121. A substrate-binding site is contributed by arginine 144.

Belongs to the Cu-Zn superoxide dismutase family. In terms of assembly, homodimer. Requires Cu cation as cofactor. Zn(2+) is required as a cofactor.

Its subcellular location is the cytoplasm. The catalysed reaction is 2 superoxide + 2 H(+) = H2O2 + O2. Functionally, destroys radicals which are normally produced within the cells and which are toxic to biological systems. The chain is Superoxide dismutase [Cu-Zn] (SOD1) from Yarrowia lipolytica (strain CLIB 122 / E 150) (Yeast).